The sequence spans 235 residues: Octanoyltransferase (235 aa).

One can recognise a BPL/LPL catalytic domain in the interval 44-231 (DTTADELWLV…HQVGLPNENN (188 aa)). Substrate-binding positions include 83–90 (RGGQVTYH), 150–152 (SLG), and 163–165 (GLA). The active-site Acyl-thioester intermediate is Cys181.

Belongs to the LipB family.

It localises to the cytoplasm. It carries out the reaction octanoyl-[ACP] + L-lysyl-[protein] = N(6)-octanoyl-L-lysyl-[protein] + holo-[ACP] + H(+). Its pathway is protein modification; protein lipoylation via endogenous pathway; protein N(6)-(lipoyl)lysine from octanoyl-[acyl-carrier-protein]: step 1/2. Catalyzes the transfer of endogenously produced octanoic acid from octanoyl-acyl-carrier-protein onto the lipoyl domains of lipoate-dependent enzymes. Lipoyl-ACP can also act as a substrate although octanoyl-ACP is likely to be the physiological substrate. This Colwellia psychrerythraea (strain 34H / ATCC BAA-681) (Vibrio psychroerythus) protein is Octanoyltransferase.